A 510-amino-acid polypeptide reads, in one-letter code: Guanosine import ATP-binding protein NupO (510 aa).

ABC transporter domains lie at 5 to 240 (IEML…VGRE) and 257 to 501 (LAID…AGST). Residue 37–44 (GENGAGKS) participates in ATP binding.

The protein belongs to the ABC transporter superfamily. The complex is composed of two ATP-binding proteins (NupO), two transmembrane proteins (NupP and NupQ) and a solute-binding protein (NupN).

It is found in the cell membrane. In terms of biological role, part of an ABC transporter complex involved in the uptake of guanosine. Responsible for energy coupling to the transport system. May be a nucleoside transporter of broad specificity but with various affinities for different substrates. The polypeptide is Guanosine import ATP-binding protein NupO (Bacillus subtilis (strain 168)).